We begin with the raw amino-acid sequence, 383 residues long: Outer membrane protein S2 (383 aa).

The N-terminal stretch at 1-21 (MKRKVLALVIPALLAAGAAHA) is a signal peptide.

This sequence belongs to the Gram-negative porin family. In terms of assembly, homotrimer.

Its subcellular location is the cell outer membrane. Forms pores that allow passive diffusion of small molecules across the outer membrane. The chain is Outer membrane protein S2 (ompS2) from Salmonella typhi.